The following is a 179-amino-acid chain: ATP synthase subunit delta 2 (179 aa).

The protein belongs to the ATPase delta chain family. In terms of assembly, F-type ATPases have 2 components, F(1) - the catalytic core - and F(0) - the membrane proton channel. F(1) has five subunits: alpha(3), beta(3), gamma(1), delta(1), epsilon(1). F(0) has three main subunits: a(1), b(2) and c(10-14). The alpha and beta chains form an alternating ring which encloses part of the gamma chain. F(1) is attached to F(0) by a central stalk formed by the gamma and epsilon chains, while a peripheral stalk is formed by the delta and b chains.

It localises to the cell inner membrane. Functionally, f(1)F(0) ATP synthase produces ATP from ADP in the presence of a proton or sodium gradient. F-type ATPases consist of two structural domains, F(1) containing the extramembraneous catalytic core and F(0) containing the membrane proton channel, linked together by a central stalk and a peripheral stalk. During catalysis, ATP synthesis in the catalytic domain of F(1) is coupled via a rotary mechanism of the central stalk subunits to proton translocation. In terms of biological role, this protein is part of the stalk that links CF(0) to CF(1). It either transmits conformational changes from CF(0) to CF(1) or is implicated in proton conduction. The chain is ATP synthase subunit delta 2 from Syntrophotalea carbinolica (strain DSM 2380 / NBRC 103641 / GraBd1) (Pelobacter carbinolicus).